The following is a 68-amino-acid chain: Metallothionein-3 (68 aa).

An N-acetylmethionine modification is found at M1. The beta stretch occupies residues 1–30; that stretch reads MDPETCPCPSGGSCTCADSCKCEGCKCTSC. Positions 6, 8, 14, 16, 20, 22, 25, 27, and 30 each coordinate a divalent metal cation. An alpha region spans residues 31–68; sequence KKSCCSCCPAECEKCAKDCVCKGGEAAEAEAEKCSCCQ. At S33 the chain carries Phosphoserine. Residues C34, C35, C37, C38, C42, C45, C49, C51, C64, C66, and C67 each contribute to the a divalent metal cation site.

Belongs to the metallothionein superfamily. Type 1 family. As to expression, abundant in a subset of astrocytes in the normal human brain, but greatly reduced in the Alzheimer disease (AD) brain.

In terms of biological role, binds heavy metals. Contains three zinc and three copper atoms per polypeptide chain and only a negligible amount of cadmium. Inhibits survival and neurite formation of cortical neurons in vitro. The sequence is that of Metallothionein-3 (MT3) from Homo sapiens (Human).